The primary structure comprises 975 residues: C-1-tetrahydrofolate synthase, mitochondrial (975 aa).

The N-terminal 34 residues, 1–34 (MLSRLSLLSNSRAFQQARWRIYRLKVSPTVHASQ), are a transit peptide targeting the mitochondrion. Residues 35–343 (YHILSGRKLA…KPLPLHLESP (309 aa)) are methylenetetrahydrofolate dehydrogenase and cyclohydrolase. Residues 83–87 (YVRMK) and 130–132 (IQL) each bind substrate. Residues 201–203 (GRS) and serine 226 each bind NADP(+). A substrate-binding site is contributed by 301 to 305 (PGGVG). A formyltetrahydrofolate synthetase region spans residues 344–975 (VPSDIDISRA…DDDGEIEGLF (632 aa)). Residue 408 to 415 (TPLGEGKS) participates in ATP binding.

The protein in the N-terminal section; belongs to the tetrahydrofolate dehydrogenase/cyclohydrolase family. It in the C-terminal section; belongs to the formate--tetrahydrofolate ligase family. Homodimer.

The protein resides in the mitochondrion. The catalysed reaction is (6R)-5,10-methylene-5,6,7,8-tetrahydrofolate + NADP(+) = (6R)-5,10-methenyltetrahydrofolate + NADPH. It catalyses the reaction (6R)-5,10-methenyltetrahydrofolate + H2O = (6R)-10-formyltetrahydrofolate + H(+). It carries out the reaction (6S)-5,6,7,8-tetrahydrofolate + formate + ATP = (6R)-10-formyltetrahydrofolate + ADP + phosphate. It functions in the pathway one-carbon metabolism; tetrahydrofolate interconversion. In terms of biological role, mitochondrial isozyme of C-1-tetrahydrofolate synthase. The trifunctional enzyme catalyzes the interconversion of the one-carbon derivatives of tetrahydrofolate (THF) between different oxidation states by the enzymatic activities 10-formyltetrahydrofolate synthetase, 5,lO-methenyltetrahydrofolate cyclohydrolase, and 5,lO-methylenetetrahydrofolate dehydrogenase. This Saccharomyces cerevisiae (strain ATCC 204508 / S288c) (Baker's yeast) protein is C-1-tetrahydrofolate synthase, mitochondrial.